Reading from the N-terminus, the 257-residue chain is Outer membrane protein YaiO (257 aa).

The signal sequence occupies residues 1 to 19; it reads MIKRTLLAAAIFSALPAYA.

The protein localises to the cell outer membrane. In Escherichia coli (strain K12), this protein is Outer membrane protein YaiO (yaiO).